We begin with the raw amino-acid sequence, 382 residues long: Protein-arginine rhamnosyltransferase (382 aa).

DTDP-beta-L-rhamnose-binding positions include 17-20 (NFGD), Tyr187, Gln252, and 268-272 (RGEDS). Catalysis depends on Asp20, which acts as the Proton acceptor. Glu270 is an active-site residue.

The protein belongs to the glycosyltransferase 104 family.

It carries out the reaction dTDP-beta-L-rhamnose + L-arginyl-[protein] = N(omega)-(alpha-L-rhamnosyl)-L-arginyl-[protein] + dTDP + H(+). Functionally, protein-arginine rhamnosyltransferase that catalyzes the transfer of a single rhamnose to elongation factor P (EF-P) on 'Lys-32', a modification required for EF-P-dependent rescue of polyproline stalled ribosomes. The chain is Protein-arginine rhamnosyltransferase from Neisseria meningitidis.